A 668-amino-acid chain; its full sequence is CLK4-associating serine/arginine rich protein (668 aa).

A Phosphoserine modification is found at Ser-101. Disordered stretches follow at residues 173-232 (AEVE…GMAD) and 252-668 (AKAL…HYRH). A compositionally biased stretch (acidic residues) spans 182 to 214 (PEEEESPAEEESNSDEDEVIPDIDVEVDVDELN). A compositionally biased stretch (basic residues) spans 265-283 (RRSRRQRREFREKRLRGRK). Phosphoserine occurs at positions 285 and 294. Over residues 290–313 (ARRDSPTYDPYKRSPSESSSESRS) the composition is skewed to basic and acidic residues. Position 327 is a phosphothreonine (Thr-327). 2 positions are modified to phosphoserine: Ser-331 and Ser-335. Low complexity-rich tracts occupy residues 340 to 353 (AAAA…GAAP) and 378 to 395 (SSSS…SRSS). The span at 396–435 (SRSRRGYYRSGRHARSRSRSWSRSRSRSRRYSRSRSRGRR) shows a compositional bias: basic residues. Residues 436 to 446 (HSDGGSRDGHR) show a composition bias toward basic and acidic residues. Basic residues predominate over residues 475–486 (RGARGPRHHSSS). 2 stretches are compositionally biased toward low complexity: residues 487-510 (HSRS…SRSQ) and 518-527 (QSHSQSQSHS). Position 541 is a phosphoserine (Ser-541). Thr-567 carries the phosphothreonine modification. Residues 579-641 (ALNRQFKADK…ERQYSRQSRS (63 aa)) adopt a coiled-coil conformation. Composition is skewed to basic and acidic residues over residues 584 to 611 (FKAD…ELRA) and 619 to 635 (KERE…ERQY). Over residues 636–645 (SRQSRSPSPR) the composition is skewed to low complexity. A compositionally biased stretch (basic residues) spans 653 to 668 (SRRRSRSRSRSPHYRH).

Belongs to the splicing factor SR family. In terms of assembly, probably interacts with CLK4. Post-translationally, phosphorylated in vitro by CLK4. As to expression, highly expressed in brain. Expressed at intermediate level in lung and liver. In brain, it is expressed in the hippocampus, cerebellum and olfactory bulb.

It localises to the nucleus. The protein resides in the nucleoplasm. Functionally, probably functions as an alternative splicing regulator. May regulate the mRNA splicing of genes such as CLK1. May act by regulating members of the CLK kinase family. The protein is CLK4-associating serine/arginine rich protein (Clasrp) of Mus musculus (Mouse).